The following is an 89-amino-acid chain: Small ribosomal subunit protein uS19 (89 aa).

It belongs to the universal ribosomal protein uS19 family.

Protein S19 forms a complex with S13 that binds strongly to the 16S ribosomal RNA. The polypeptide is Small ribosomal subunit protein uS19 (Phocaeicola vulgatus (strain ATCC 8482 / DSM 1447 / JCM 5826 / CCUG 4940 / NBRC 14291 / NCTC 11154) (Bacteroides vulgatus)).